An 88-amino-acid chain; its full sequence is Sec-independent protein translocase protein TatA (88 aa).

The helical transmembrane segment at 1-21 (MGSLSPWHWVVLVVVVVLLFG) threads the bilayer. Residues 49-71 (ENQAQASALETPMQNPTVVQSQR) are compositionally biased toward polar residues. The interval 49–88 (ENQAQASALETPMQNPTVVQSQRVVPPWSTEQDHTEARPA) is disordered. Over residues 79–88 (EQDHTEARPA) the composition is skewed to basic and acidic residues.

The protein belongs to the TatA/E family. As to quaternary structure, the Tat system comprises two distinct complexes: a TatABC complex, containing multiple copies of TatA, TatB and TatC subunits, and a separate TatA complex, containing only TatA subunits. Substrates initially bind to the TatABC complex, which probably triggers association of the separate TatA complex to form the active translocon.

The protein resides in the cell membrane. Its function is as follows. Part of the twin-arginine translocation (Tat) system that transports large folded proteins containing a characteristic twin-arginine motif in their signal peptide across membranes. TatA could form the protein-conducting channel of the Tat system. In Mycobacterium leprae (strain TN), this protein is Sec-independent protein translocase protein TatA.